The following is a 141-amino-acid chain: Large ribosomal subunit protein uL11 (141 aa).

This sequence belongs to the universal ribosomal protein uL11 family. As to quaternary structure, part of the ribosomal stalk of the 50S ribosomal subunit. Interacts with L10 and the large rRNA to form the base of the stalk. L10 forms an elongated spine to which L12 dimers bind in a sequential fashion forming a multimeric L10(L12)X complex. One or more lysine residues are methylated.

Forms part of the ribosomal stalk which helps the ribosome interact with GTP-bound translation factors. The sequence is that of Large ribosomal subunit protein uL11 from Natranaerobius thermophilus (strain ATCC BAA-1301 / DSM 18059 / JW/NM-WN-LF).